The following is a 406-amino-acid chain: Glutamyl-tRNA reductase (406 aa).

Substrate contacts are provided by residues 51–54 (TCNR), serine 101, 106–108 (ESE), and glutamine 112. Cysteine 52 (nucleophile) is an active-site residue. NADP(+) is bound at residue 180 to 185 (GAGSIG).

It belongs to the glutamyl-tRNA reductase family. In terms of assembly, homodimer.

It catalyses the reaction (S)-4-amino-5-oxopentanoate + tRNA(Glu) + NADP(+) = L-glutamyl-tRNA(Glu) + NADPH + H(+). It participates in porphyrin-containing compound metabolism; protoporphyrin-IX biosynthesis; 5-aminolevulinate from L-glutamyl-tRNA(Glu): step 1/2. Catalyzes the NADPH-dependent reduction of glutamyl-tRNA(Glu) to glutamate 1-semialdehyde (GSA). This is Glutamyl-tRNA reductase from Caldivirga maquilingensis (strain ATCC 700844 / DSM 13496 / JCM 10307 / IC-167).